The following is a 704-amino-acid chain: Translational regulator orb2 (704 aa).

The interval 1–64 (MDSLKLPKAN…PPGLGSSTPI (64 aa)) is disordered. Positions 1 to 87 (MDSLKLPKAN…ILQSFHHSKH (87 aa)) are gln/His-rich. Residues 9-42 (ANSATSSASGSNSNLSGSTSASASAATSPTSSGT) show a composition bias toward low complexity. S74, S88, and S100 each carry phosphoserine. 3 disordered regions span residues 82-106 (FHHS…SNLL), 166-266 (LPNL…GVSP), and 417-438 (SPSR…GGNV). Residues 163–240 (CGGLPNLNLN…PSSPGGGGGG (78 aa)) are gln/His-rich. 3 stretches are compositionally biased toward low complexity: residues 176-205 (QLHQ…QQQL), 218-233 (QQQQ…SPSS), and 417-429 (SPSR…PHSP). S425 and S428 each carry phosphoserine. RRM domains are found at residues 447 to 538 (RKVF…PWRL) and 555 to 637 (KTVF…PYVL).

Monomer. Upon neuronal stimulation, forms stable amyloid-like oligomers composed of isoform A and isoform B which are required for formation of persistent long-term memory. Isoform A is critical for oligomer formation. Phe-5 of isoform A is required for amyloid-like oligomerization. Rapidly forms amyloids and toxic intermediates are extremely transient. Unlike in the adult nervous system, remains monomeric in the early embryo. Interacts with the translational regulator bol. Interacts with Tob; the interaction is enhanced by neuronal stimulation, stabilizes isoform A and induces oligomerization. In terms of processing, phosphorylation regulates interaction with Tob and oligomerization. Protein phosphatase 2A keeps both Orb2 and Tob in an unphosphorylated form. Following synaptic activation, unphosphorylated Orb2 is bound and stabilized by unphosphorylated Tob. Tob recruits activated LimK which phosphorylates both Orb2 and Tob and enhances Orb2 oligomerization. In terms of tissue distribution, broadly expressed throughout the nervous system of embryo, larva and adult including the ventral nerve cord and brain (at protein level). In early embryos, deposited maternally and distributed uniformly throughout the embryo until the extended germband stage. By mid-embryogenesis, highest levels are found in the central and peripheral nervous systems with lower expression also detected in the ectoderm and mesoderm. In adults, high levels are present in the head and body of both sexes with higher expression in testis than ovary. In the ovary, expressed in both germ and follicle cells. In adult head, predominantly neuronal with broad expression throughout the brain and ventral ganglia including the mushroom body.

Its subcellular location is the perikaryon. The protein resides in the cell projection. It localises to the axon. The protein localises to the dendrite. It is found in the synapse. Its subcellular location is the cytoplasm. The protein resides in the perinuclear region. Functionally, RNA-binding protein involved in translational regulation and required for long-term memory. Required in mushroom body gamma neurons for long-term memory in male courtship. Binds to mRNA 3'-UTRs. In its monomeric form, acts as a translational repressor of genes involved in neuronal growth, synapse formation and protein turnover. In its amyloid-like oligomeric form, acts as a translational activator. The monomeric form reduces poly(A) tail length and destabilizes mRNA while the oligomeric form protects and elongates the poly(A) tail and stabilizes mRNA. Involved in asymmetric cell division in the central nervous system. Plays a role in synapse formation and morphology at neuromuscular junctions by modulating the translation of the tumor suppressor brat. Required for the progression of spermatogenesis through meiosis and for sperm differentiation. During sperm differentiation, required to asymmetrically localize and activate the translation of protein kinase aPKC mRNAs which is necessary for spermatid cyst polarization. Also required during spermatid cyst polarization for localization and translation of its own mRNA. In terms of biological role, required for initial memory acquisition. Following subsequent late dopaminergic pathway activation, recruits isoform B into a complex to activate translation of CaMKII which is required for long-term memory consolidation. The sequence is that of Translational regulator orb2 from Drosophila melanogaster (Fruit fly).